A 399-amino-acid chain; its full sequence is Elongation factor Tu (399 aa).

One can recognise a tr-type G domain in the interval 10-209 (KPHVNIGTIG…AVDSYIPTPK (200 aa)). A G1 region spans residues 19–26 (GHVDHGKT). GTP is bound at residue 19-26 (GHVDHGKT). Residue threonine 26 coordinates Mg(2+). Residues 60–64 (GITIA) form a G2 region. The tract at residues 81-84 (DCPG) is G3. GTP is bound by residues 81–85 (DCPGH) and 136–139 (NKTD). The G4 stretch occupies residues 136-139 (NKTD). Residues 174–176 (SAL) are G5.

It belongs to the TRAFAC class translation factor GTPase superfamily. Classic translation factor GTPase family. EF-Tu/EF-1A subfamily. Monomer.

Its subcellular location is the cytoplasm. It catalyses the reaction GTP + H2O = GDP + phosphate + H(+). Its function is as follows. GTP hydrolase that promotes the GTP-dependent binding of aminoacyl-tRNA to the A-site of ribosomes during protein biosynthesis. The polypeptide is Elongation factor Tu (Campylobacter hominis (strain ATCC BAA-381 / DSM 21671 / CCUG 45161 / LMG 19568 / NCTC 13146 / CH001A)).